We begin with the raw amino-acid sequence, 782 residues long: General transcription and DNA repair factor IIH helicase/translocase subunit XPB (782 aa).

A compositionally biased stretch (basic and acidic residues) spans 1–11 (MGKRDRVDRDK). The segment at 1–52 (MGKRDRVDRDKKKSKKRQYEEEEEDEDDAPGNESQEAVPSAAGKQVDESSTK) is disordered. Residues 6–18 (RVDRDKKKSKKRQ) carry the Nuclear localization signal motif. Positions 20–30 (EEEEEDEDDAP) are enriched in acidic residues. A Phosphoserine modification is found at serine 34. Positions 328-489 (FGNGRARSGV…LNFLIGPKLY (162 aa)) constitute a Helicase ATP-binding domain. Residue 341-348 (PCGAGKSL) participates in ATP binding. A DEVH box motif is present at residues 442-445 (EVHT). The Helicase C-terminal domain occupies 543–703 (ACQFLIKFHE…AGMEEEELAF (161 aa)). Serine 686 carries the post-translational modification Phosphoserine. The residue at position 751 (serine 751) is a Phosphoserine; by CK2.

The protein belongs to the helicase family. RAD25/XPB subfamily. Component of the 7-subunit TFIIH core complex composed of XPB/ERCC3, XPD/ERCC2, GTF2H1, GTF2H2, GTF2H3, GTF2H4 and GTF2H5, which is active in NER. The core complex associates with the 3-subunit CDK-activating kinase (CAK) module composed of CCNH/cyclin H, CDK7 and MNAT1 to form the 10-subunit holoenzyme (holo-TFIIH) active in transcription. Interacts with PUF60. Interacts with ATF7IP. Interacts with KAT2A; leading to KAT2A recruitment to promoters and acetylation of histones. Part of TBP-based Pol II pre-initiation complex (PIC), in which Pol II core assembles with general transcription factors and other specific initiation factors including GTF2E1, GTF2E2, GTF2F1, GTF2F2, TCEA1, ERCC2, ERCC3, GTF2H2, GTF2H3, GTF2H4, GTF2H5, GTF2A1, GTF2A2, GTF2B and TBP; this large multi-subunit PIC complex mediates DNA unwinding and targets Pol II core to the transcription start site where the first phosphodiester bond forms. In terms of processing, phosphorylation on Ser-751 by CK2 controls the 5'-excision activity of ERCC1-XPF endonuclease; phosphorylated protein inhibits the excision activity and thus NER. Dephosphorylation reactivates the 5'-excision step. Phosphorylation has no effect on transcription or the 3'-5' helicase activity.

It is found in the nucleus. It catalyses the reaction Couples ATP hydrolysis with the unwinding of duplex DNA by translocating in the 3'-5' direction.. The enzyme catalyses ATP + H2O = ADP + phosphate + H(+). With respect to regulation, phosphorylation on Ser-751 by CK2 controls the 5'-excision activity of ERCC1-XPF endonuclease; phosphorylated protein inhibits the excision activity and thus NER. ATPase activity is stimulated by TFIIH subunit p52 (GTF2H4). DNA translocase activity by this subunit in TFIIH is stimulated by XPA, ERCC5/XPG and XFP plus ERCC1. ATP-dependent 3'-5' DNA helicase/translocase; binds dsDNA rather than ssDNA, unzipping it in a translocase rather than classical helicase activity. Component of the general transcription and DNA repair factor IIH (TFIIH) core complex. When complexed to CDK-activating kinase (CAK), involved in RNA transcription by RNA polymerase II. The ATPase activity of XPB/ERCC3, but not its helicase activity, is required for DNA opening; it may wrap around the damaged DNA wedging it open, causing localized melting and twisting that allows XPD/ERCC2 helicase to anchor. The ATP-dependent helicase activity of XPB/ERCC3 may be required for promoter escape. Also involved in transcription-coupled nucleotide excision repair (NER) of damaged DNA. In NER, TFIIH acts by opening DNA around the lesion to allow the excision of the damaged oligonucleotide and its replacement by a new DNA fragment. The structure of the TFIIH transcription complex differs from the NER-TFIIH complex; large movements by XPD/ERCC2 and XPB/ERCC3 are stabilized by XPA. This chain is General transcription and DNA repair factor IIH helicase/translocase subunit XPB (Ercc3), found in Rattus norvegicus (Rat).